A 286-amino-acid chain; its full sequence is Polygalacturonan/rhamnogalacturonan transport system permease protein YtcP (286 aa).

6 helical membrane-spanning segments follow: residues 9–29 (LIYG…IHVI), 69–89 (LLVS…LSSL), 106–126 (MFLV…FLVV), 131–151 (LLDS…NLII), 176–196 (GIFF…ISLF), and 251–271 (TIKM…YPFI). Residues 69–271 (LLVSVFVTVI…IPVLLVYPFI (203 aa)) form the ABC transmembrane type-1 domain.

It belongs to the binding-protein-dependent transport system permease family. CysTW subfamily. As to quaternary structure, the complex is probably composed of two ATP-binding proteins (MsmX), two transmembrane proteins (YtcP and YteP) and a solute-binding protein (YtcQ).

The protein localises to the cell membrane. Involved in pectin degradation. Part of the ABC transporter complex YtcQP-YteP involved in the uptake of polygalacturonan and rhamnogalacturonan type I. Responsible for the translocation of the substrate across the membrane. The sequence is that of Polygalacturonan/rhamnogalacturonan transport system permease protein YtcP (ytcP) from Bacillus subtilis (strain 168).